A 173-amino-acid polypeptide reads, in one-letter code: Photosystem I assembly protein Ycf3 (173 aa).

3 TPR repeats span residues 35–68 (AYIY…EENK), 72–105 (GETL…NPKQ), and 120–153 (GRNA…YPGG).

This sequence belongs to the Ycf3 family.

The protein localises to the cellular thylakoid membrane. Functionally, essential for the assembly of the photosystem I (PSI) complex. May act as a chaperone-like factor to guide the assembly of the PSI subunits. This is Photosystem I assembly protein Ycf3 from Prochlorococcus marinus (strain MIT 9312).